We begin with the raw amino-acid sequence, 199 residues long: LIM domain-containing protein WLIM2b (199 aa).

2 consecutive LIM zinc-binding domains span residues 8–68 and 106–166; these read QKCK…LFKE and EKCA…LFKE.

As to quaternary structure, interacts with F-actin. As to expression, expressed in roots, leaves, stems, flowers and siliques. Barely detected in pollen.

It localises to the cytoplasm. It is found in the cytoskeleton. Binds to actin filaments and promotes cross-linking into thick bundles. Has an actin-stabilizing activity. The actin regulatory activities are not regulated by pH and [Ca(2+)]. This Arabidopsis thaliana (Mouse-ear cress) protein is LIM domain-containing protein WLIM2b.